Reading from the N-terminus, the 243-residue chain is Orotidine 5'-phosphate decarboxylase (243 aa).

Substrate contacts are provided by residues D16, K38, D65–T74, T120, R181, Q190, G210, and R211. K67 serves as the catalytic Proton donor.

It belongs to the OMP decarboxylase family. Type 1 subfamily. As to quaternary structure, homodimer.

It carries out the reaction orotidine 5'-phosphate + H(+) = UMP + CO2. It functions in the pathway pyrimidine metabolism; UMP biosynthesis via de novo pathway; UMP from orotate: step 2/2. Catalyzes the decarboxylation of orotidine 5'-monophosphate (OMP) to uridine 5'-monophosphate (UMP). The chain is Orotidine 5'-phosphate decarboxylase from Bradyrhizobium sp. (strain ORS 278).